Reading from the N-terminus, the 386-residue chain is Ribonucleoside-diphosphate reductase subunit M2 (386 aa).

Polar residues predominate over residues 1 to 24 (MSSTRSPLKTKNENTISTKMNNMS). The tract at residues 1–36 (MSSTRSPLKTKNENTISTKMNNMSFVDKENTPPSLS) is disordered. At Ser-6 the chain carries Phosphoserine. The residue at position 31 (Thr-31) is a Phosphothreonine. Positions 135, 166, and 169 each coordinate Fe cation. Tyr-173 is an active-site residue. Fe cation contacts are provided by Glu-229, Glu-263, and His-266.

The protein belongs to the ribonucleoside diphosphate reductase small chain family. As to quaternary structure, heterodimer of a large and a small subunit. Requires Fe cation as cofactor.

The protein localises to the cytoplasm. The catalysed reaction is a 2'-deoxyribonucleoside 5'-diphosphate + [thioredoxin]-disulfide + H2O = a ribonucleoside 5'-diphosphate + [thioredoxin]-dithiol. In terms of biological role, provides the precursors necessary for DNA synthesis. Catalyzes the biosynthesis of deoxyribonucleotides from the corresponding ribonucleotides. This is Ribonucleoside-diphosphate reductase subunit M2 (rrm2) from Danio rerio (Zebrafish).